Reading from the N-terminus, the 700-residue chain is Polyribonucleotide nucleotidyltransferase (700 aa).

Residues aspartate 486 and aspartate 492 each coordinate Mg(2+). The region spanning 554–613 (PKIISTTINPDKIREVIGPGGKMINKIIDETGVKIDINDDGRVYIFSSDIQAGKRARSMI) is the KH domain. In terms of domain architecture, S1 motif spans 623-691 (GQVFLGRVIR…KQGRVNLSRK (69 aa)).

This sequence belongs to the polyribonucleotide nucleotidyltransferase family. Mg(2+) is required as a cofactor.

Its subcellular location is the cytoplasm. It carries out the reaction RNA(n+1) + phosphate = RNA(n) + a ribonucleoside 5'-diphosphate. Functionally, involved in mRNA degradation. Catalyzes the phosphorolysis of single-stranded polyribonucleotides processively in the 3'- to 5'-direction. This chain is Polyribonucleotide nucleotidyltransferase, found in Acetivibrio thermocellus (strain ATCC 27405 / DSM 1237 / JCM 9322 / NBRC 103400 / NCIMB 10682 / NRRL B-4536 / VPI 7372) (Clostridium thermocellum).